Here is a 31-residue protein sequence, read N- to C-terminus: Cytochrome b6-f complex subunit 6 (31 aa).

The helical transmembrane segment at 4 to 24 (ITSYFGFLLVALTITSALFIG) threads the bilayer.

The protein belongs to the PetL family. The 4 large subunits of the cytochrome b6-f complex are cytochrome b6, subunit IV (17 kDa polypeptide, PetD), cytochrome f and the Rieske protein, while the 4 small subunits are PetG, PetL, PetM and PetN. The complex functions as a dimer.

The protein localises to the plastid. Its subcellular location is the chloroplast thylakoid membrane. Functionally, component of the cytochrome b6-f complex, which mediates electron transfer between photosystem II (PSII) and photosystem I (PSI), cyclic electron flow around PSI, and state transitions. PetL is important for photoautotrophic growth as well as for electron transfer efficiency and stability of the cytochrome b6-f complex. In Panax ginseng (Korean ginseng), this protein is Cytochrome b6-f complex subunit 6.